The sequence spans 181 residues: Photosystem I assembly protein Ycf4 (181 aa).

2 helical membrane passes run 19-41 (YFWA…SSYF) and 61-83 (LVMS…TLFW).

The protein belongs to the Ycf4 family.

The protein localises to the plastid. It localises to the chloroplast thylakoid membrane. Functionally, seems to be required for the assembly of the photosystem I complex. The protein is Photosystem I assembly protein Ycf4 of Trieres chinensis (Marine centric diatom).